The primary structure comprises 319 residues: Acetyl-coenzyme A carboxylase carboxyl transferase subunit alpha (319 aa).

In terms of domain architecture, CoA carboxyltransferase C-terminal spans 32–293 (NVDIEVRALE…KAVLLNELEA (262 aa)).

It belongs to the AccA family. In terms of assembly, acetyl-CoA carboxylase is a heterohexamer composed of biotin carboxyl carrier protein (AccB), biotin carboxylase (AccC) and two subunits each of ACCase subunit alpha (AccA) and ACCase subunit beta (AccD).

The protein resides in the cytoplasm. The catalysed reaction is N(6)-carboxybiotinyl-L-lysyl-[protein] + acetyl-CoA = N(6)-biotinyl-L-lysyl-[protein] + malonyl-CoA. Its pathway is lipid metabolism; malonyl-CoA biosynthesis; malonyl-CoA from acetyl-CoA: step 1/1. Component of the acetyl coenzyme A carboxylase (ACC) complex. First, biotin carboxylase catalyzes the carboxylation of biotin on its carrier protein (BCCP) and then the CO(2) group is transferred by the carboxyltransferase to acetyl-CoA to form malonyl-CoA. The polypeptide is Acetyl-coenzyme A carboxylase carboxyl transferase subunit alpha (Xylella fastidiosa (strain Temecula1 / ATCC 700964)).